A 167-amino-acid polypeptide reads, in one-letter code: Dual specificity protein phosphatase 1B (167 aa).

In terms of domain architecture, Tyrosine-protein phosphatase spans 24 to 165; it reads DLSEIQQGLF…LQQFEKSIQG (142 aa). Cys-109 (phosphocysteine intermediate) is an active-site residue.

Belongs to the protein-tyrosine phosphatase family. Non-receptor class dual specificity subfamily. In terms of assembly, associates with MPK3 and MPK6. Interacts with MPK6 is promoted during HR-like responses triggered by fungal elicitors, whereas interaction with MPK3 in repressed. In terms of tissue distribution, expressed in flowers, seedlings, roots, leaves, and seeds. Present in stomata and meristematic cells.

It localises to the nucleus. The protein localises to the cytoplasm. It catalyses the reaction O-phospho-L-tyrosyl-[protein] + H2O = L-tyrosyl-[protein] + phosphate. The enzyme catalyses O-phospho-L-seryl-[protein] + H2O = L-seryl-[protein] + phosphate. The catalysed reaction is O-phospho-L-threonyl-[protein] + H2O = L-threonyl-[protein] + phosphate. Functionally, has a dual specificity toward Ser/Thr and Tyr-containing proteins. Prevents biotic and abiotic stress responses, including ozone, oxidative stress and pathogen attacks; represses MAPK activities during hypersensitive response to limit the spread of the HR response after infection by necrotrophic pathogen such as Botrytis cinerea. May be also involved in ABA and salt responses. Dephosphorylates MPK3 and MPK6. In Arabidopsis thaliana (Mouse-ear cress), this protein is Dual specificity protein phosphatase 1B (DSPTP1B).